The chain runs to 170 residues: 3-dehydroquinate dehydratase (170 aa).

Tyr22 functions as the Proton acceptor in the catalytic mechanism. Asn76, His82, and Asp89 together coordinate substrate. Residue His102 is the Proton donor of the active site. Substrate-binding positions include 103–104 and Arg113; that span reads LT.

It belongs to the type-II 3-dehydroquinase family. As to quaternary structure, homododecamer.

The catalysed reaction is 3-dehydroquinate = 3-dehydroshikimate + H2O. Its pathway is metabolic intermediate biosynthesis; chorismate biosynthesis; chorismate from D-erythrose 4-phosphate and phosphoenolpyruvate: step 3/7. In terms of biological role, catalyzes a trans-dehydration via an enolate intermediate. The protein is 3-dehydroquinate dehydratase (aroQ) of Helicobacter pylori (strain J99 / ATCC 700824) (Campylobacter pylori J99).